The primary structure comprises 331 residues: tRNA-cytidine(32) 2-sulfurtransferase (331 aa).

The PP-loop motif signature appears at 73–78 (SGGKDS). Positions 148, 151, and 239 each coordinate [4Fe-4S] cluster.

This sequence belongs to the TtcA family. Homodimer. The cofactor is Mg(2+). It depends on [4Fe-4S] cluster as a cofactor.

It is found in the cytoplasm. It carries out the reaction cytidine(32) in tRNA + S-sulfanyl-L-cysteinyl-[cysteine desulfurase] + AH2 + ATP = 2-thiocytidine(32) in tRNA + L-cysteinyl-[cysteine desulfurase] + A + AMP + diphosphate + H(+). It participates in tRNA modification. Catalyzes the ATP-dependent 2-thiolation of cytidine in position 32 of tRNA, to form 2-thiocytidine (s(2)C32). The sulfur atoms are provided by the cysteine/cysteine desulfurase (IscS) system. This chain is tRNA-cytidine(32) 2-sulfurtransferase, found in Burkholderia mallei (strain NCTC 10247).